We begin with the raw amino-acid sequence, 331 residues long: Flagellar P-ring protein (331 aa).

The N-terminal stretch at 1-22 (MRKVTIFIIIIVALTGFGSVRI) is a signal peptide.

This sequence belongs to the FlgI family. The basal body constitutes a major portion of the flagellar organelle and consists of four rings (L,P,S, and M) mounted on a central rod.

It localises to the periplasm. Its subcellular location is the bacterial flagellum basal body. Functionally, assembles around the rod to form the L-ring and probably protects the motor/basal body from shearing forces during rotation. This chain is Flagellar P-ring protein, found in Pseudothermotoga lettingae (strain ATCC BAA-301 / DSM 14385 / NBRC 107922 / TMO) (Thermotoga lettingae).